The following is a 350-amino-acid chain: tRNA pseudouridine synthase D (350 aa).

Aspartate 79 functions as the Nucleophile in the catalytic mechanism. A TRUD domain is found at 154 to 306 (GAPNYYGPQR…EQERRPIVLY (153 aa)).

Belongs to the pseudouridine synthase TruD family.

It carries out the reaction uridine(13) in tRNA = pseudouridine(13) in tRNA. Functionally, responsible for synthesis of pseudouridine from uracil-13 in transfer RNAs. The sequence is that of tRNA pseudouridine synthase D from Pseudoalteromonas atlantica (strain T6c / ATCC BAA-1087).